The following is a 398-amino-acid chain: 1-deoxy-D-xylulose 5-phosphate reductoisomerase (398 aa).

NADPH-binding residues include Thr10, Gly11, Ser12, Ile13, Lys37, Asn38, and Asn124. 1-deoxy-D-xylulose 5-phosphate is bound at residue Lys125. Glu126 is an NADPH binding site. Residue Asp150 participates in Mn(2+) binding. Ser151, Glu152, Ser186, and His209 together coordinate 1-deoxy-D-xylulose 5-phosphate. A Mn(2+)-binding site is contributed by Glu152. An NADPH-binding site is contributed by Gly215. The 1-deoxy-D-xylulose 5-phosphate site is built by Ser222, Asn227, Lys228, and Glu231. Glu231 contributes to the Mn(2+) binding site.

The protein belongs to the DXR family. As to quaternary structure, homodimer. Requires Mg(2+) as cofactor. Mn(2+) serves as cofactor.

The enzyme catalyses 2-C-methyl-D-erythritol 4-phosphate + NADP(+) = 1-deoxy-D-xylulose 5-phosphate + NADPH + H(+). Its pathway is isoprenoid biosynthesis; isopentenyl diphosphate biosynthesis via DXP pathway; isopentenyl diphosphate from 1-deoxy-D-xylulose 5-phosphate: step 1/6. Functionally, catalyzes the NADPH-dependent rearrangement and reduction of 1-deoxy-D-xylulose-5-phosphate (DXP) to 2-C-methyl-D-erythritol 4-phosphate (MEP). The protein is 1-deoxy-D-xylulose 5-phosphate reductoisomerase of Buchnera aphidicola subsp. Acyrthosiphon pisum (strain 5A).